A 78-amino-acid polypeptide reads, in one-letter code: Acyl carrier protein (78 aa).

One can recognise a Carrier domain in the interval 2-77; that stretch reads SEIAQKVKSI…QAIAYLEQHV (76 aa). S37 is modified (O-(pantetheine 4'-phosphoryl)serine).

The protein belongs to the acyl carrier protein (ACP) family. In terms of processing, 4'-phosphopantetheine is transferred from CoA to a specific serine of apo-ACP by AcpS. This modification is essential for activity because fatty acids are bound in thioester linkage to the sulfhydryl of the prosthetic group.

The protein resides in the cytoplasm. Its pathway is lipid metabolism; fatty acid biosynthesis. Its function is as follows. Carrier of the growing fatty acid chain in fatty acid biosynthesis. This Cytophaga hutchinsonii (strain ATCC 33406 / DSM 1761 / CIP 103989 / NBRC 15051 / NCIMB 9469 / D465) protein is Acyl carrier protein.